A 120-amino-acid chain; its full sequence is Large ribosomal subunit protein uL22 (120 aa).

This sequence belongs to the universal ribosomal protein uL22 family. In terms of assembly, part of the 50S ribosomal subunit.

In terms of biological role, this protein binds specifically to 23S rRNA; its binding is stimulated by other ribosomal proteins, e.g. L4, L17, and L20. It is important during the early stages of 50S assembly. It makes multiple contacts with different domains of the 23S rRNA in the assembled 50S subunit and ribosome. Functionally, the globular domain of the protein is located near the polypeptide exit tunnel on the outside of the subunit, while an extended beta-hairpin is found that lines the wall of the exit tunnel in the center of the 70S ribosome. This Corynebacterium aurimucosum (strain ATCC 700975 / DSM 44827 / CIP 107346 / CN-1) (Corynebacterium nigricans) protein is Large ribosomal subunit protein uL22.